The primary structure comprises 144 residues: Putative lipoprotein MAH_0816 (144 aa).

A signal peptide spans 1–24; it reads MRWPMQNRTTAVIAVALATTALVA. Cys25 is lipidated: N-palmitoyl cysteine. Cys25 carries the S-diacylglycerol cysteine lipid modification.

Belongs to the mycobacterial 19 kDa antigen family.

Its subcellular location is the cell membrane. The polypeptide is Putative lipoprotein MAH_0816 (Mycobacterium avium subsp. hominissuis (strain TH135)).